The following is a 569-amino-acid chain: Proline--tRNA ligase (569 aa).

Belongs to the class-II aminoacyl-tRNA synthetase family. ProS type 1 subfamily. As to quaternary structure, homodimer.

It localises to the cytoplasm. The enzyme catalyses tRNA(Pro) + L-proline + ATP = L-prolyl-tRNA(Pro) + AMP + diphosphate. Functionally, catalyzes the attachment of proline to tRNA(Pro) in a two-step reaction: proline is first activated by ATP to form Pro-AMP and then transferred to the acceptor end of tRNA(Pro). As ProRS can inadvertently accommodate and process non-cognate amino acids such as alanine and cysteine, to avoid such errors it has two additional distinct editing activities against alanine. One activity is designated as 'pretransfer' editing and involves the tRNA(Pro)-independent hydrolysis of activated Ala-AMP. The other activity is designated 'posttransfer' editing and involves deacylation of mischarged Ala-tRNA(Pro). The misacylated Cys-tRNA(Pro) is not edited by ProRS. The polypeptide is Proline--tRNA ligase (Endomicrobium trichonymphae).